The following is a 492-amino-acid chain: Protein nucleotidyltransferase YdiU (492 aa).

The ATP site is built by G91, G93, R94, K114, D126, G127, R177, and R184. The active-site Proton acceptor is the D253. Positions 254 and 263 each coordinate Mg(2+). D263 serves as a coordination point for ATP.

It belongs to the SELO family. It depends on Mg(2+) as a cofactor. The cofactor is Mn(2+).

The enzyme catalyses L-seryl-[protein] + ATP = 3-O-(5'-adenylyl)-L-seryl-[protein] + diphosphate. It carries out the reaction L-threonyl-[protein] + ATP = 3-O-(5'-adenylyl)-L-threonyl-[protein] + diphosphate. The catalysed reaction is L-tyrosyl-[protein] + ATP = O-(5'-adenylyl)-L-tyrosyl-[protein] + diphosphate. It catalyses the reaction L-histidyl-[protein] + UTP = N(tele)-(5'-uridylyl)-L-histidyl-[protein] + diphosphate. The enzyme catalyses L-seryl-[protein] + UTP = O-(5'-uridylyl)-L-seryl-[protein] + diphosphate. It carries out the reaction L-tyrosyl-[protein] + UTP = O-(5'-uridylyl)-L-tyrosyl-[protein] + diphosphate. Its function is as follows. Nucleotidyltransferase involved in the post-translational modification of proteins. It can catalyze the addition of adenosine monophosphate (AMP) or uridine monophosphate (UMP) to a protein, resulting in modifications known as AMPylation and UMPylation. In Maridesulfovibrio salexigens (strain ATCC 14822 / DSM 2638 / NCIMB 8403 / VKM B-1763) (Desulfovibrio salexigens), this protein is Protein nucleotidyltransferase YdiU.